We begin with the raw amino-acid sequence, 274 residues long: Penicillin-insensitive murein endopeptidase (274 aa).

Positions 1–19 (MNKTAIALLALLASSASLA) are cleaved as a signal peptide. 3 cysteine pairs are disulfide-bonded: Cys44-Cys265, Cys187-Cys235, and Cys216-Cys223. The Zn(2+) site is built by His110, His113, Asp120, Asp147, His150, and His211. The interval 228 to 265 (LPPPGDGCGAELQSWFAPPKPGTTKPEKKTPPPLPPSC) is disordered.

It belongs to the peptidase M74 family. Dimer. Zn(2+) is required as a cofactor.

It is found in the periplasm. In terms of biological role, murein endopeptidase that cleaves the D-alanyl-meso-2,6-diamino-pimelyl amide bond that connects peptidoglycan strands. Likely plays a role in the removal of murein from the sacculus. This is Penicillin-insensitive murein endopeptidase from Shigella boydii serotype 18 (strain CDC 3083-94 / BS512).